Reading from the N-terminus, the 319-residue chain is 4-diphosphocytidyl-2-C-methyl-D-erythritol kinase (319 aa).

Residue lysine 18 is part of the active site. 103 to 113 (PIGAGLAGGST) contributes to the ATP binding site. Aspartate 145 is a catalytic residue.

Belongs to the GHMP kinase family. IspE subfamily.

The catalysed reaction is 4-CDP-2-C-methyl-D-erythritol + ATP = 4-CDP-2-C-methyl-D-erythritol 2-phosphate + ADP + H(+). It functions in the pathway isoprenoid biosynthesis; isopentenyl diphosphate biosynthesis via DXP pathway; isopentenyl diphosphate from 1-deoxy-D-xylulose 5-phosphate: step 3/6. Functionally, catalyzes the phosphorylation of the position 2 hydroxy group of 4-diphosphocytidyl-2C-methyl-D-erythritol. The polypeptide is 4-diphosphocytidyl-2-C-methyl-D-erythritol kinase (Prochlorococcus marinus (strain NATL1A)).